Here is a 272-residue protein sequence, read N- to C-terminus: Protein FAM210A (272 aa).

The DUF1279 domain maps to 117–229; sequence DKSISLYQRF…GYMSTPPPVK (113 aa). Residues 136–156 traverse the membrane as a helical segment; the sequence is VLIPVHLITSGVWFGTFYYAA. Residues 229 to 271 are a coiled coil; that stretch reads KEYLQDRMEETKELITEKMEETKDRLTEKLQETKEKVSFKKKV. A disordered region spans residues 246–272; the sequence is KMEETKDRLTEKLQETKEKVSFKKKVE.

This sequence belongs to the FAM210 family. As to quaternary structure, interacts with ATAD3A.

It is found in the membrane. The protein localises to the mitochondrion. The protein resides in the cytoplasm. In terms of biological role, may play a role in the structure and strength of both muscle and bone. This chain is Protein FAM210A (FAM210A), found in Pongo abelii (Sumatran orangutan).